The primary structure comprises 273 residues: 4-hydroxy-tetrahydrodipicolinate reductase (273 aa).

NAD(+)-binding positions include 8–13 (GALGRM), D35, 103–105 (GTT), and 129–132 (SQNY). H161 (proton donor/acceptor) is an active-site residue. H162 is a binding site for (S)-2,3,4,5-tetrahydrodipicolinate. Residue K165 is the Proton donor of the active site. 171 to 172 (GT) provides a ligand contact to (S)-2,3,4,5-tetrahydrodipicolinate.

Belongs to the DapB family.

It localises to the cytoplasm. It catalyses the reaction (S)-2,3,4,5-tetrahydrodipicolinate + NAD(+) + H2O = (2S,4S)-4-hydroxy-2,3,4,5-tetrahydrodipicolinate + NADH + H(+). It carries out the reaction (S)-2,3,4,5-tetrahydrodipicolinate + NADP(+) + H2O = (2S,4S)-4-hydroxy-2,3,4,5-tetrahydrodipicolinate + NADPH + H(+). The protein operates within amino-acid biosynthesis; L-lysine biosynthesis via DAP pathway; (S)-tetrahydrodipicolinate from L-aspartate: step 4/4. In terms of biological role, catalyzes the conversion of 4-hydroxy-tetrahydrodipicolinate (HTPA) to tetrahydrodipicolinate. The chain is 4-hydroxy-tetrahydrodipicolinate reductase from Methanococcus aeolicus (strain ATCC BAA-1280 / DSM 17508 / OCM 812 / Nankai-3).